The primary structure comprises 66 residues: UPF0337 protein RPA4217 (66 aa).

It belongs to the UPF0337 (CsbD) family.

The protein is UPF0337 protein RPA4217 of Rhodopseudomonas palustris (strain ATCC BAA-98 / CGA009).